A 222-amino-acid polypeptide reads, in one-letter code: Latexin (222 aa).

Positions 1–97 constitute a Cystatin LXN-type 1 domain; the sequence is MEIPPTHYAA…NFTFEGEIGK (97 aa). At Lys55 the chain carries N6-acetyllysine. The segment at 98–117 is alpha-helical linker; the sequence is NPDEEDNTFYQSLMSLKRPL. The Cystatin LXN-type 2 domain occupies 118-222; sequence EAQDIPDNFG…SRLPKEGQAE (105 aa).

The protein belongs to the protease inhibitor I47 (latexin) family. As to expression, highly enriched in macrophages.

Its subcellular location is the cytoplasm. Its function is as follows. Hardly reversible, non-competitive, and potent inhibitor of CPA1, CPA2 and CPA4. May play a role in inflammation. The polypeptide is Latexin (Lxn) (Mus musculus (Mouse)).